Consider the following 208-residue polypeptide: Small ribosomal subunit protein eS8 (208 aa).

This sequence belongs to the eukaryotic ribosomal protein eS8 family. As to quaternary structure, component of the small ribosomal subunit. Identified in a IGF2BP1-dependent mRNP granule complex containing untranslated mRNAs. Part of the small subunit (SSU) processome, composed of more than 70 proteins and the RNA chaperone small nucleolar RNA (snoRNA) U3.

It is found in the cytoplasm. The protein localises to the membrane. The protein resides in the nucleus. Its subcellular location is the nucleolus. Component of the small ribosomal subunit. The ribosome is a large ribonucleoprotein complex responsible for the synthesis of proteins in the cell. Part of the small subunit (SSU) processome, first precursor of the small eukaryotic ribosomal subunit. During the assembly of the SSU processome in the nucleolus, many ribosome biogenesis factors, an RNA chaperone and ribosomal proteins associate with the nascent pre-rRNA and work in concert to generate RNA folding, modifications, rearrangements and cleavage as well as targeted degradation of pre-ribosomal RNA by the RNA exosome. The sequence is that of Small ribosomal subunit protein eS8 (rps-8) from Caenorhabditis elegans.